Here is a 120-residue protein sequence, read N- to C-terminus: Large ribosomal subunit protein uL22 (120 aa).

The interval 1-22 is disordered; that stretch reads MLVNRRYTAKGKNLPSSPKKVR.

This sequence belongs to the universal ribosomal protein uL22 family. As to quaternary structure, part of the 50S ribosomal subunit.

Its function is as follows. This protein binds specifically to 23S rRNA; its binding is stimulated by other ribosomal proteins, e.g. L4, L17, and L20. It is important during the early stages of 50S assembly. It makes multiple contacts with different domains of the 23S rRNA in the assembled 50S subunit and ribosome. Functionally, the globular domain of the protein is located near the polypeptide exit tunnel on the outside of the subunit, while an extended beta-hairpin is found that lines the wall of the exit tunnel in the center of the 70S ribosome. The polypeptide is Large ribosomal subunit protein uL22 (Borreliella burgdorferi (strain ATCC 35210 / DSM 4680 / CIP 102532 / B31) (Borrelia burgdorferi)).